A 132-amino-acid chain; its full sequence is Small ribosomal subunit protein uS8 (132 aa).

This sequence belongs to the universal ribosomal protein uS8 family. Part of the 30S ribosomal subunit. Contacts proteins S5 and S12.

In terms of biological role, one of the primary rRNA binding proteins, it binds directly to 16S rRNA central domain where it helps coordinate assembly of the platform of the 30S subunit. The chain is Small ribosomal subunit protein uS8 from Bartonella bacilliformis (strain ATCC 35685 / KC583 / Herrer 020/F12,63).